The sequence spans 743 residues: F-box protein COS111 (743 aa).

In terms of domain architecture, F-box spans 145–191 (ELHIKNLPVEILDYIFYLVDDNLDYKSCMYTCKLFYFLAKPYYYENL). Disordered regions lie at residues 224–257 (IKPG…DPQY) and 311–330 (FSNV…SSST). Over residues 229–248 (DEDEQEEGQEENAENGEEEN) the composition is skewed to acidic residues.

Functionally, F-box protein probably involved in ubiquitin conjugation pathway. In Candida albicans (strain SC5314 / ATCC MYA-2876) (Yeast), this protein is F-box protein COS111 (COS111).